The primary structure comprises 320 residues: NADH-ubiquinone oxidoreductase chain 1 (320 aa).

8 consecutive transmembrane segments (helical) span residues 3–23 (LITI…VAFL), 72–92 (ILLI…WTPI), 103–123 (LGFL…LWAG), 147–167 (VTLG…TMQL), 174–194 (HIWL…STLA), 226–246 (FFLA…ILFI), 255–275 (ELFL…FLWI), and 295–315 (FLPL…SISG).

The protein belongs to the complex I subunit 1 family.

Its subcellular location is the mitochondrion inner membrane. It carries out the reaction a ubiquinone + NADH + 5 H(+)(in) = a ubiquinol + NAD(+) + 4 H(+)(out). Core subunit of the mitochondrial membrane respiratory chain NADH dehydrogenase (Complex I) that is believed to belong to the minimal assembly required for catalysis. Complex I functions in the transfer of electrons from NADH to the respiratory chain. The immediate electron acceptor for the enzyme is believed to be ubiquinone. The protein is NADH-ubiquinone oxidoreductase chain 1 (MT-ND1) of Varanus jobiensis (Peach throat monitor).